The chain runs to 823 residues: MTQEATKPNIQEPRAERYNPHAIEQKWQGQWQESGLYKFDENAPGEKFYALTMFPYPSGNLHIGHWYANVAPDARARWLRMRGYNVLFPMAFDAFGLPAENAAIKNNTNPATWTYANIERMTGQFSRMGTMIDWSRKFATCDPEYYRWNQWFFIEFWKRGLAYKKGGLVNWCPKDQTVLANEQVVNGHCERCGTAVERRNLSQWYLKITDYAEELLDFSATDMPEKVRAMQTNWIGKSVGAEVTFDTPAGPETVFTTRPDTLMGATFMVLAPEHAKVKELTTDEQRAEVEAYVAAAGRKTDVERQQEGEKTGVFTGSYATHPISGHQLPIWVADYVLVTYGTGSIMAVPAHDERDFAFAKKFDLPIREVIRAEGSEGMGDQPSEPYSGEGQIVNSGEFDGMPGGKASIAAIIARLEERGVAKAKTTYRLRDWLFARQRYWGTPIPFVHCEKCGMQPVPEDQLPVKLPENVAFTPTGQSPLKLDEEWKTTTCPCCGGPAERETDTMDTFVDSSWYMYRYLSPNYDGGPFDPSKAGLLPVDLYTGGIEHAILHLLYSRFWTKVMRDMGLTTQSEPFARLRNQGMVLGEDGEKMSKSRGNVVDPDDLVREYGADTVRAFLMFIAPWELGGPWDPQGINGPSKWLSRVWNVFFEEKVSGPEEKMQGADVRFAVHSALKKVNDDFERMSFNTIISTLMELTNALVKAKRSPVFGTPVWEEALDIFNRMLAPVVPHIAEEIWHERGQKGSVHTAQWPQVDEAAAVRDTVTIGVQVSGKVRGEVSISKTASQEEALSAARAIAEVQKHLEGKTVVKEIYVPGRIINIVAK.

Positions 55–65 (PYPSGNLHIGH) match the 'HIGH' region motif. The short motif at 590-594 (KMSKS) is the 'KMSKS' region element. Lys-593 contacts ATP.

The protein belongs to the class-I aminoacyl-tRNA synthetase family.

It localises to the cytoplasm. It catalyses the reaction tRNA(Leu) + L-leucine + ATP = L-leucyl-tRNA(Leu) + AMP + diphosphate. The chain is Leucine--tRNA ligase from Deinococcus radiodurans (strain ATCC 13939 / DSM 20539 / JCM 16871 / CCUG 27074 / LMG 4051 / NBRC 15346 / NCIMB 9279 / VKM B-1422 / R1).